We begin with the raw amino-acid sequence, 226 residues long: Ribonuclease T (226 aa).

Residues 20–194 (VVIDVETAGF…YDTERTAELF (175 aa)) enclose the Exonuclease domain. 4 residues coordinate Mg(2+): Asp23, Glu25, His181, and Asp186. Catalysis depends on His181, which acts as the Proton donor/acceptor.

The protein belongs to the RNase T family. As to quaternary structure, homodimer. It depends on Mg(2+) as a cofactor.

Its function is as follows. Trims short 3' overhangs of a variety of RNA species, leaving a one or two nucleotide 3' overhang. Responsible for the end-turnover of tRNA: specifically removes the terminal AMP residue from uncharged tRNA (tRNA-C-C-A). Also appears to be involved in tRNA biosynthesis. This chain is Ribonuclease T, found in Shewanella denitrificans (strain OS217 / ATCC BAA-1090 / DSM 15013).